The primary structure comprises 878 residues: Phosphoenolpyruvate carboxylase (878 aa).

Catalysis depends on residues H138 and K545.

It belongs to the PEPCase type 1 family. Mg(2+) is required as a cofactor.

It catalyses the reaction oxaloacetate + phosphate = phosphoenolpyruvate + hydrogencarbonate. Its function is as follows. Forms oxaloacetate, a four-carbon dicarboxylic acid source for the tricarboxylic acid cycle. The protein is Phosphoenolpyruvate carboxylase of Shewanella sediminis (strain HAW-EB3).